The following is a 214-amino-acid chain: uncharacterized protein (214 aa).

The next 4 helical transmembrane spans lie at 10-30, 55-75, 147-167, and 174-194; these read IPPLAVYLLVSGVVGVESLGI, IGVGVVAVIGAAVGDSIGYAI, VSGAICWAGGTTALVYFAGMA, and RFSWIALIITVVVGIIAAILL.

It belongs to the DedA family.

The protein localises to the cell membrane. This is an uncharacterized protein from Mycobacterium leprae (strain TN).